Consider the following 140-residue polypeptide: Acyl carrier protein 1, chloroplastic (140 aa).

The transit peptide at 1-56 directs the protein to the chloroplast; that stretch reads MASAAAGASICIKSASFSPLAPGRISSLRSVSLPVSRKSFPSLKSSKSSFALRVSC. Positions 60–135 constitute a Carrier domain; sequence PETVAKVCGI…DAADLIEKLM (76 aa). The residue at position 95 (Ser-95) is an O-(pantetheine 4'-phosphoryl)serine.

This sequence belongs to the acyl carrier protein (ACP) family. Post-translationally, 4'-phosphopantetheine is transferred from CoA to a specific serine of apo-ACP by acpS. This modification is essential for activity because fatty acids are bound in thioester linkage to the sulfhydryl of the prosthetic group.

It is found in the plastid. Its subcellular location is the chloroplast. The protein operates within lipid metabolism; fatty acid biosynthesis. Functionally, carrier of the growing fatty acid chain in fatty acid biosynthesis. The chain is Acyl carrier protein 1, chloroplastic (ACL1.1) from Cuphea lanceolata (Cigar flower).